Consider the following 335-residue polypeptide: Glycerol-3-phosphate dehydrogenase [NAD(P)+] (335 aa).

NADPH contacts are provided by W14, R33, and K111. Residues K111, G140, and S142 each coordinate sn-glycerol 3-phosphate. Residue A144 participates in NADPH binding. K195, D248, S258, R259, and N260 together coordinate sn-glycerol 3-phosphate. Catalysis depends on K195, which acts as the Proton acceptor. R259 provides a ligand contact to NADPH. Residues V283 and E285 each coordinate NADPH.

Belongs to the NAD-dependent glycerol-3-phosphate dehydrogenase family.

Its subcellular location is the cytoplasm. The enzyme catalyses sn-glycerol 3-phosphate + NAD(+) = dihydroxyacetone phosphate + NADH + H(+). It carries out the reaction sn-glycerol 3-phosphate + NADP(+) = dihydroxyacetone phosphate + NADPH + H(+). It participates in membrane lipid metabolism; glycerophospholipid metabolism. In terms of biological role, catalyzes the reduction of the glycolytic intermediate dihydroxyacetone phosphate (DHAP) to sn-glycerol 3-phosphate (G3P), the key precursor for phospholipid synthesis. The protein is Glycerol-3-phosphate dehydrogenase [NAD(P)+] of Burkholderia mallei (strain NCTC 10247).